The primary structure comprises 62 residues: Large ribosomal subunit protein eL37 (62 aa).

Cys20, Cys23, Cys35, and Cys38 together coordinate Zn(2+). Residues 20-38 (CRRCGRRSYHVRKKACSAC) form a C4-type zinc finger.

It belongs to the eukaryotic ribosomal protein eL37 family. Zn(2+) is required as a cofactor.

In terms of biological role, binds to the 23S rRNA. The protein is Large ribosomal subunit protein eL37 of Methanococcus aeolicus (strain ATCC BAA-1280 / DSM 17508 / OCM 812 / Nankai-3).